The chain runs to 375 residues: Lipid-A-disaccharide synthase (375 aa).

The protein belongs to the LpxB family.

It carries out the reaction a lipid X + a UDP-2-N,3-O-bis[(3R)-3-hydroxyacyl]-alpha-D-glucosamine = a lipid A disaccharide + UDP + H(+). The protein operates within bacterial outer membrane biogenesis; LPS lipid A biosynthesis. Condensation of UDP-2,3-diacylglucosamine and 2,3-diacylglucosamine-1-phosphate to form lipid A disaccharide, a precursor of lipid A, a phosphorylated glycolipid that anchors the lipopolysaccharide to the outer membrane of the cell. The sequence is that of Lipid-A-disaccharide synthase from Pseudomonas entomophila (strain L48).